A 280-amino-acid polypeptide reads, in one-letter code: Delta(3,5)-Delta(2,4)-dienoyl-CoA isomerase (280 aa).

Glu-154 (proton donor/acceptor) is an active-site residue. The Peroxisome targeting signal (PTS1) motif lies at 278-280 (HKL).

The protein belongs to the enoyl-CoA hydratase/isomerase family.

It is found in the cytoplasm. It localises to the cytosol. The protein localises to the peroxisome. It catalyses the reaction a (3E,5Z)-dienoyl-CoA = a (2E,4E)-(5,6-saturated)-dienoyl-CoA. Its pathway is lipid metabolism; fatty acid beta-oxidation. Functionally, peroxisomal di-isomerase that is involved in fatty acid metabolism enzyme by converting 3,5-dienoyl-CoAs to the corresponding 2,4-dienoyl-CoAs. Involved in fatty acid beta-oxidation, which is important for lipid droplets degradation and infectious growth. The protein is Delta(3,5)-Delta(2,4)-dienoyl-CoA isomerase of Pyricularia oryzae (strain 70-15 / ATCC MYA-4617 / FGSC 8958) (Rice blast fungus).